We begin with the raw amino-acid sequence, 393 residues long: NAD(P)H-quinone oxidoreductase subunit H, chloroplastic (393 aa).

The protein belongs to the complex I 49 kDa subunit family. As to quaternary structure, NDH is composed of at least 16 different subunits, 5 of which are encoded in the nucleus.

The protein resides in the plastid. The protein localises to the chloroplast thylakoid membrane. It catalyses the reaction a plastoquinone + NADH + (n+1) H(+)(in) = a plastoquinol + NAD(+) + n H(+)(out). The catalysed reaction is a plastoquinone + NADPH + (n+1) H(+)(in) = a plastoquinol + NADP(+) + n H(+)(out). Its function is as follows. NDH shuttles electrons from NAD(P)H:plastoquinone, via FMN and iron-sulfur (Fe-S) centers, to quinones in the photosynthetic chain and possibly in a chloroplast respiratory chain. The immediate electron acceptor for the enzyme in this species is believed to be plastoquinone. Couples the redox reaction to proton translocation, and thus conserves the redox energy in a proton gradient. This is NAD(P)H-quinone oxidoreductase subunit H, chloroplastic from Nasturtium officinale (Watercress).